A 1236-amino-acid polypeptide reads, in one-letter code: DNA topoisomerase 2 (1236 aa).

ATP-binding positions include asparagine 65, asparagine 96, 124 to 126 (SSN), 137 to 144 (GRHGYGAK), and 354 to 356 (QSK). Residues 434 to 548 (RTLIITEGDS…KLLQNNPGYI (115 aa)) enclose the Toprim domain. Glutamate 440, aspartate 517, and aspartate 519 together coordinate Mg(2+). In terms of domain architecture, Topo IIA-type catalytic spans 685–1101 (IPHCVDGLKP…TPVKMWLTEL (417 aa)). Tyrosine 775 functions as the O-(5'-phospho-DNA)-tyrosine intermediate in the catalytic mechanism. Positions 956 to 965 (ALAQRIYING) are interaction with DNA. The interval 1161-1211 (YEKPPPSKRRPGESVGGARPSDSAARTVGKRLVGSRSEFKNKKPMSRKNNV) is disordered.

This sequence belongs to the type II topoisomerase family. Homodimer. Mg(2+) is required as a cofactor. Requires Mn(2+) as cofactor. It depends on Ca(2+) as a cofactor.

It localises to the nucleus. It catalyses the reaction ATP-dependent breakage, passage and rejoining of double-stranded DNA.. Functionally, control of topological states of DNA by transient breakage and subsequent rejoining of DNA strands. Topoisomerase II makes double-strand breaks. The sequence is that of DNA topoisomerase 2 (TOP2) from Leishmania chagasi.